The sequence spans 436 residues: MLKVSALLCVCAAAWCSQTLAAAAAVAVAGGRSDGGNFLDEKQWLTTISQYDKEVGQWNKFRDEVEDDYFRTWNPGKPFDQALDPAKDPCLKTKCSRHKVCITQDAQTALCISHRRLTHSMKEVGGSHKQWRGLPSSTCKPCPIAYASPVCGSDGHSYSSQCKLEYQACVLGKQISIKCEGRCPCPSDKSMNIGRNVKRACSDLEFREVANRLRDWFKALHESGSQNKKTKALLRPERSRFDTSILPICKDSLGWMFNRLDTNYDLLLDQSELGSIYLDKNEQCTKAFFNSCDTYKDSLISNNEWCYCFQRQQDPPCHTELSNIQKRQGIKKLLGQYIPLCDEDGYYKPTQCHGSVGQCWCVDRYGNEVVGSRINGVADCAIDFEISGDFASGDFREWTDDEGEEDDIMNDKDDIEDDDEDEGDDDDDGDVHDGYI.

The signal sequence occupies residues Met1–Ala22. Cystine bridges form between Cys90–Cys101, Cys95–Cys111, Cys139–Cys169, Cys142–Cys162, Cys151–Cys183, Cys317–Cys341, Cys352–Cys359, and Cys361–Cys380. One can recognise a Kazal-like domain in the interval Gly133 to Cys185. In terms of domain architecture, Thyroglobulin type-1 spans Asp314–Cys380. Residues Ser387 and Ser392 are each glycosylated (O-linked (Xyl...) (glycosaminoglycan) serine). Residues Gly393–Ile436 are disordered. Acidic residues predominate over residues Thr399 to Asp430.

Contains chondroitin sulfate and heparan sulfate O-linked oligosaccharides. Expressed in brain.

It is found in the secreted. The protein localises to the extracellular space. Its subcellular location is the extracellular matrix. In terms of biological role, may participate in diverse steps of neurogenesis. Inhibits the processing of pro-matrix metalloproteinase 2 (MMP-2) by MT1-MMP and MT3-MMP. May interfere with tumor invasion. The polypeptide is Testican-3 (Spock3) (Mus musculus (Mouse)).